The chain runs to 195 residues: Glycerol-3-phosphate acyltransferase (195 aa).

6 helical membrane passes run 4 to 24, 53 to 73, 80 to 100, 110 to 130, 133 to 153, and 154 to 174; these read GLILALVFGYLLGSIPFGLLL, GLAAATLLLDALKGTAAVLIA, TAVWAGLGAFLGHLFPVWLGF, LGVLIGLAWQVALIFAVIWLA, FLFRYSSLAALTAAVIVPIAL, and YFLSAPQIAVLFVVMSIIVFI.

This sequence belongs to the PlsY family. Probably interacts with PlsX.

It localises to the cell inner membrane. It catalyses the reaction an acyl phosphate + sn-glycerol 3-phosphate = a 1-acyl-sn-glycero-3-phosphate + phosphate. Its pathway is lipid metabolism; phospholipid metabolism. Catalyzes the transfer of an acyl group from acyl-phosphate (acyl-PO(4)) to glycerol-3-phosphate (G3P) to form lysophosphatidic acid (LPA). This enzyme utilizes acyl-phosphate as fatty acyl donor, but not acyl-CoA or acyl-ACP. The sequence is that of Glycerol-3-phosphate acyltransferase from Mesorhizobium japonicum (strain LMG 29417 / CECT 9101 / MAFF 303099) (Mesorhizobium loti (strain MAFF 303099)).